The sequence spans 113 residues: Endoribonuclease SymE (113 aa).

Residues 29–74 (SRYPDYSRIPAITLKGQWLEAAGFATGTAVVVKVMEGCIVLTAQPA) form the SpoVT-AbrB domain.

This sequence belongs to the SymE family.

The protein localises to the cytoplasm. Involved in the degradation and recycling of damaged RNA. It is itself a target for degradation by the ATP-dependent protease Lon. This Escherichia coli (strain ATCC 8739 / DSM 1576 / NBRC 3972 / NCIMB 8545 / WDCM 00012 / Crooks) protein is Endoribonuclease SymE.